A 357-amino-acid polypeptide reads, in one-letter code: Thiamine thiazole synthase 1, chloroplastic (357 aa).

The N-terminal 51 residues, 1–51 (MSISAAGVATGLGANVELKSNVGSSSSSVAGVRLFTSRKAQLRRCAAPATS), are a transit peptide targeting the chloroplast. Residues Ala103, 123-124 (EQ), Gly131, and Ala196 each bind substrate. Cys225 is modified (2,3-didehydroalanine (Cys)). Residues Asp227, His242, Met294, and 304–306 (RMG) each bind substrate.

The protein belongs to the THI4 family. Homooctamer. The cofactor is Fe cation. In terms of processing, during the catalytic reaction, a sulfide is transferred from Cys-225 to a reaction intermediate, generating a dehydroalanine residue.

It is found in the plastid. The protein localises to the chloroplast. The catalysed reaction is [ADP-thiazole synthase]-L-cysteine + glycine + NAD(+) = [ADP-thiazole synthase]-dehydroalanine + ADP-5-ethyl-4-methylthiazole-2-carboxylate + nicotinamide + 3 H2O + 2 H(+). In terms of biological role, involved in biosynthesis of the thiamine precursor thiazole. Catalyzes the conversion of NAD and glycine to adenosine diphosphate 5-(2-hydroxyethyl)-4-methylthiazole-2-carboxylic acid (ADT), an adenylated thiazole intermediate. The reaction includes an iron-dependent sulfide transfer from a conserved cysteine residue of the protein to a thiazole intermediate. The enzyme can only undergo a single turnover, which suggests it is a suicide enzyme. May have additional roles in adaptation to various stress conditions and in DNA damage tolerance. This is Thiamine thiazole synthase 1, chloroplastic from Physcomitrium patens (Spreading-leaved earth moss).